A 2261-amino-acid chain; its full sequence is Phospholipid-transporting ATPase ABCA1 (2261 aa).

The S-palmitoyl cysteine moiety is linked to residue C3. An N-linked (GlcNAc...) asparagine glycan is attached at N14. The helical transmembrane segment at T22–V42 threads the bilayer. C23 is lipidated: S-palmitoyl cysteine. The Extracellular segment spans residues R43–S639. Positions W69–P80 are annulus domain 1. A disulfide bridge connects residues C75 and C309. N98, N151, N161, N196, N244, N292, N337, and N349 each carry an N-linked (GlcNAc...) asparagine glycan. The interval S368–L379 is annulus domain 2. 4 N-linked (GlcNAc...) asparagine glycosylation sites follow: N400, N478, N489, and N521. Residues E564 to A594 are gateway domain. Helical transmembrane passes span M640–V660, F683–I703, S716–I736, L745–V765, and I777–F797. N820 is a glycosylation site (N-linked (GlcNAc...) asparagine). Residues M827–P847 form a helical membrane-spanning segment. The ABC transporter 1 domain maps to V899 to V1131. G933–T940 serves as a coordination point for ATP. Residues T941 to G961 traverse the membrane as a helical segment. A Phosphoserine; by PKA modification is found at S1042. Residues C1110 and C1111 are each lipidated (S-palmitoyl cysteine). 2 N-linked (GlcNAc...) asparagine glycosylation sites follow: N1144 and N1294. Residues F1285–G1310 are disordered. Over residues E1287–D1299 the composition is skewed to acidic residues. Residue S1296 is modified to Phosphoserine. A helical membrane pass occupies residues I1351–F1371. At G1372–L1656 the chain is on the extracellular side. N1453 carries an N-linked (GlcNAc...) asparagine glycan. The cysteines at positions 1463 and 1477 are disulfide-linked. N-linked (GlcNAc...) asparagine glycosylation is found at N1499, N1504, and N1637. A run of 6 helical transmembrane segments spans residues V1657–I1677, F1703–C1723, L1735–P1755, V1768–L1788, I1802–M1822, and N1852–Y1872. The ABC transporter 2 domain maps to L1912 to R2144. An ATP-binding site is contributed by G1946 to S1953. Residue N2044 is glycosylated (N-linked (GlcNAc...) asparagine). Position 2054 is a phosphoserine; by PKA (S2054). N-linked (GlcNAc...) asparagine glycosylation is present at N2238.

The protein belongs to the ABC transporter superfamily. ABCA family. In terms of assembly, interacts with MEGF10. May interact with APOE1; functionally associated with APOE1 in the biogenesis of HDLs. Interacts with ABCA8; this interaction potentiates cholesterol efflux. Interacts with ABCA12 and NR1H2; this interaction is required for ABCA1 localization to the cell surface and is necessary for its normal activity and stability. In terms of processing, phosphorylation on Ser-2054 regulates phospholipid efflux. Palmitoylated by ZDHHC8. Palmitoylation is essential for localization to the plasma membrane. In terms of tissue distribution, widely expressed in adult tissues. Highest levels are found in pregnant uterus and uterus.

The protein localises to the cell membrane. Its subcellular location is the endosome. The catalysed reaction is ATP + H2O + phospholipidSide 1 = ADP + phosphate + phospholipidSide 2.. It catalyses the reaction a 1,2-diacyl-sn-glycero-3-phosphocholine(out) + ATP + H2O = a 1,2-diacyl-sn-glycero-3-phosphocholine(in) + ADP + phosphate + H(+). The enzyme catalyses a 1,2-diacyl-sn-glycero-3-phospho-L-serine(out) + ATP + H2O = a 1,2-diacyl-sn-glycero-3-phospho-L-serine(in) + ADP + phosphate + H(+). It carries out the reaction a sphingomyelin(in) + ATP + H2O = a sphingomyelin(out) + ADP + phosphate + H(+). The catalysed reaction is cholesterol(in) + ATP + H2O = cholesterol(out) + ADP + phosphate + H(+). Its activity is regulated as follows. ATPase activity is decreased by cholesterol and ceramide. ATPase activity is stimulated by phosphatidylcholine and to a lesser degree by phosphatidylserine and sphingomyelin. Phospholipid translocase activity is highly reduced by berylium fluoride and aluminum flouride and reduced by N-ethylmaleimide. Functionally, catalyzes the translocation of specific phospholipids from the cytoplasmic to the extracellular/lumenal leaflet of membrane coupled to the hydrolysis of ATP. Thereby, participates in phospholipid transfer to apolipoproteins to form nascent high density lipoproteins/HDLs. Transports preferentially phosphatidylcholine over phosphatidylserine. May play a similar role in the efflux of intracellular cholesterol to apolipoproteins and the formation of nascent high density lipoproteins/HDLs. Translocates phospholipids from the outer face of the plasma membrane and forces it through its gateway and annulus into an elongated hydrophobic tunnel in its extracellular domain. The protein is Phospholipid-transporting ATPase ABCA1 of Mus musculus (Mouse).